The following is a 367-amino-acid chain: Metacaspase-1 (367 aa).

The interval 47-77 (DPRTAPPPQPSSAPSPPPQIHAPPGQLPHPH) is disordered. Pro residues predominate over residues 50-73 (TAPPPQPSSAPSPPPQIHAPPGQL). Active-site residues include H164 and C220.

This sequence belongs to the peptidase C14B family. As to quaternary structure, interacts (via N-terminus) with LSD1. In terms of processing, proteolytically processed; by an autocatalytic mechanism.

Cysteine protease that cleaves specifically after arginine or lysine residues. Does not cleave caspase-specific substrates. Acts as a positive regulator of cell death. Required for both oxidative stress cell death response and hypersensitive cell death response mediated by immune response. The sequence is that of Metacaspase-1 (AMC1) from Arabidopsis thaliana (Mouse-ear cress).